A 287-amino-acid chain; its full sequence is Phosphatidylserine decarboxylase proenzyme (287 aa).

Active-site charge relay system; for autoendoproteolytic cleavage activity residues include D89, H146, and S252. S252 (schiff-base intermediate with substrate; via pyruvic acid; for decarboxylase activity) is an active-site residue. S252 is subject to Pyruvic acid (Ser); by autocatalysis.

It belongs to the phosphatidylserine decarboxylase family. PSD-B subfamily. Prokaryotic type I sub-subfamily. In terms of assembly, heterodimer of a large membrane-associated beta subunit and a small pyruvoyl-containing alpha subunit. Pyruvate serves as cofactor. Is synthesized initially as an inactive proenzyme. Formation of the active enzyme involves a self-maturation process in which the active site pyruvoyl group is generated from an internal serine residue via an autocatalytic post-translational modification. Two non-identical subunits are generated from the proenzyme in this reaction, and the pyruvate is formed at the N-terminus of the alpha chain, which is derived from the carboxyl end of the proenzyme. The autoendoproteolytic cleavage occurs by a canonical serine protease mechanism, in which the side chain hydroxyl group of the serine supplies its oxygen atom to form the C-terminus of the beta chain, while the remainder of the serine residue undergoes an oxidative deamination to produce ammonia and the pyruvoyl prosthetic group on the alpha chain. During this reaction, the Ser that is part of the protease active site of the proenzyme becomes the pyruvoyl prosthetic group, which constitutes an essential element of the active site of the mature decarboxylase.

It is found in the cell membrane. It carries out the reaction a 1,2-diacyl-sn-glycero-3-phospho-L-serine + H(+) = a 1,2-diacyl-sn-glycero-3-phosphoethanolamine + CO2. Its pathway is phospholipid metabolism; phosphatidylethanolamine biosynthesis; phosphatidylethanolamine from CDP-diacylglycerol: step 2/2. Its function is as follows. Catalyzes the formation of phosphatidylethanolamine (PtdEtn) from phosphatidylserine (PtdSer). This is Phosphatidylserine decarboxylase proenzyme from Shewanella pealeana (strain ATCC 700345 / ANG-SQ1).